The sequence spans 456 residues: Bifunctional protein GlmU (456 aa).

The tract at residues 1 to 229 (MLNNAMSVVI…LSEVEGVNNR (229 aa)) is pyrophosphorylase. UDP-N-acetyl-alpha-D-glucosamine is bound by residues 11–14 (LAAG), Lys-25, Gln-76, 81–82 (GT), 103–105 (YGD), Gly-140, Glu-154, Asn-169, and Asn-227. Asp-105 is a binding site for Mg(2+). Asn-227 is a Mg(2+) binding site. Residues 230–250 (LQLSRLERVYQSEQAEKLLLA) form a linker region. Residues 251 to 456 (GVMLRDPARF…EGWRRPVKKK (206 aa)) are N-acetyltransferase. 2 residues coordinate UDP-N-acetyl-alpha-D-glucosamine: Arg-333 and Lys-351. Residue His-363 is the Proton acceptor of the active site. UDP-N-acetyl-alpha-D-glucosamine is bound by residues Tyr-366 and Asn-377. Acetyl-CoA contacts are provided by residues Ala-380, 386–387 (NY), Ser-405, Ala-423, and Arg-440.

The protein in the N-terminal section; belongs to the N-acetylglucosamine-1-phosphate uridyltransferase family. It in the C-terminal section; belongs to the transferase hexapeptide repeat family. As to quaternary structure, homotrimer. It depends on Mg(2+) as a cofactor.

The protein resides in the cytoplasm. The catalysed reaction is alpha-D-glucosamine 1-phosphate + acetyl-CoA = N-acetyl-alpha-D-glucosamine 1-phosphate + CoA + H(+). The enzyme catalyses N-acetyl-alpha-D-glucosamine 1-phosphate + UTP + H(+) = UDP-N-acetyl-alpha-D-glucosamine + diphosphate. The protein operates within nucleotide-sugar biosynthesis; UDP-N-acetyl-alpha-D-glucosamine biosynthesis; N-acetyl-alpha-D-glucosamine 1-phosphate from alpha-D-glucosamine 6-phosphate (route II): step 2/2. It functions in the pathway nucleotide-sugar biosynthesis; UDP-N-acetyl-alpha-D-glucosamine biosynthesis; UDP-N-acetyl-alpha-D-glucosamine from N-acetyl-alpha-D-glucosamine 1-phosphate: step 1/1. Its pathway is bacterial outer membrane biogenesis; LPS lipid A biosynthesis. Catalyzes the last two sequential reactions in the de novo biosynthetic pathway for UDP-N-acetylglucosamine (UDP-GlcNAc). The C-terminal domain catalyzes the transfer of acetyl group from acetyl coenzyme A to glucosamine-1-phosphate (GlcN-1-P) to produce N-acetylglucosamine-1-phosphate (GlcNAc-1-P), which is converted into UDP-GlcNAc by the transfer of uridine 5-monophosphate (from uridine 5-triphosphate), a reaction catalyzed by the N-terminal domain. The polypeptide is Bifunctional protein GlmU (Shigella boydii serotype 4 (strain Sb227)).